A 310-amino-acid polypeptide reads, in one-letter code: CCR4-NOT transcription complex subunit 7 (310 aa).

Residues D51, E53, D172, and D245 each coordinate a divalent metal cation.

This sequence belongs to the CAF1 family. In terms of assembly, component of the CCR4-NOT complex at least composed of ccf-1, ccr-4 and let-711, which is required for germ cell development in hermaphrodites. Within the complex interacts with let-711. Highly expressed in the germline. In particular, highly expressed in germ cells that enter meiosis and progress through the pachytene stage.

The protein resides in the nucleus. Its subcellular location is the cytoplasm. The enzyme catalyses Exonucleolytic cleavage of poly(A) to 5'-AMP.. Its function is as follows. Catalytic component of the CCR4-NOT complex which is one of the major cellular mRNA deadenylases and is linked to various cellular processes including bulk mRNA degradation, miRNA-mediated repression, translational repression during translational initiation and general transcription regulation. Within the complex, plays a role in miRNA-mediated deadenylation in embryos. Within the complex promotes germ cell development and fertility in hermaphrodites. Additional complex functions may be a consequence of its influence on mRNA expression. This chain is CCR4-NOT transcription complex subunit 7, found in Caenorhabditis elegans.